We begin with the raw amino-acid sequence, 518 residues long: Efflux pump terJ (518 aa).

The helical transmembrane segment at 43–63 (IAFIVVVCMAQLVSQAGLGQV) threads the bilayer. A glycan (N-linked (GlcNAc...) asparagine) is linked at N79. Helical transmembrane passes span 82-102 (QLSWFPAAYSLTVGTFILGAG), 112-132 (LLFTAGYFWLAIWTLVAAFAE), 135-155 (GPVFFCCCRVLQGIGPAFLLP), 177-197 (AFGSTAPSGFIFGGLVSALAA), 204-224 (WGFWFMAILEAVCGIAAIFWV), 244-264 (IAGCVTGISGLLLFNVALNMA), 272-292 (PYIYILLIASLVFFGLFGYIE), 311-331 (FVLATLACGWAAFGVWVFYGW), 339-359 (GISPLFACLQFSPAAISGFVA), 364-384 (GLILQKLPASVVMMISAAAFC), 400-420 (WAQLFVSIIVMPWGMEMSFPA), and 439-459 (SLVATIMNYAISLGLGFGAIV). N-linked (GlcNAc...) asparagine glycosylation occurs at N466. A helical transmembrane segment spans residues 477–497 (AWYLGVGLAASGIILTMFFAL).

This sequence belongs to the major facilitator superfamily.

It is found in the cell membrane. Functionally, efflux pump that might be required for efficient secretion of terrein or other secondary metabolies produced by the terrein genne cluster. The sequence is that of Efflux pump terJ from Aspergillus terreus (strain NIH 2624 / FGSC A1156).